A 479-amino-acid polypeptide reads, in one-letter code: Siroheme synthase (479 aa).

The precorrin-2 dehydrogenase /sirohydrochlorin ferrochelatase stretch occupies residues 1 to 202 (MNYLPIFLDL…GRDSEAEAQL (202 aa)). NAD(+)-binding positions include 22-23 (ET) and 43-44 (PA). S128 bears the Phosphoserine mark. Residues 217–479 (GEVYLVGAGP…TPLEAPDHLA (263 aa)) form a uroporphyrinogen-III C-methyltransferase region. S-adenosyl-L-methionine is bound at residue P226. D249 acts as the Proton acceptor in catalysis. Residue K271 is the Proton donor of the active site. S-adenosyl-L-methionine-binding positions include 302 to 304 (GGD), I307, 332 to 333 (TA), M384, and G413.

The protein in the N-terminal section; belongs to the precorrin-2 dehydrogenase / sirohydrochlorin ferrochelatase family. This sequence in the C-terminal section; belongs to the precorrin methyltransferase family.

The catalysed reaction is uroporphyrinogen III + 2 S-adenosyl-L-methionine = precorrin-2 + 2 S-adenosyl-L-homocysteine + H(+). It catalyses the reaction precorrin-2 + NAD(+) = sirohydrochlorin + NADH + 2 H(+). It carries out the reaction siroheme + 2 H(+) = sirohydrochlorin + Fe(2+). Its pathway is cofactor biosynthesis; adenosylcobalamin biosynthesis; precorrin-2 from uroporphyrinogen III: step 1/1. It participates in cofactor biosynthesis; adenosylcobalamin biosynthesis; sirohydrochlorin from precorrin-2: step 1/1. It functions in the pathway porphyrin-containing compound metabolism; siroheme biosynthesis; precorrin-2 from uroporphyrinogen III: step 1/1. The protein operates within porphyrin-containing compound metabolism; siroheme biosynthesis; siroheme from sirohydrochlorin: step 1/1. Its pathway is porphyrin-containing compound metabolism; siroheme biosynthesis; sirohydrochlorin from precorrin-2: step 1/1. In terms of biological role, multifunctional enzyme that catalyzes the SAM-dependent methylations of uroporphyrinogen III at position C-2 and C-7 to form precorrin-2 via precorrin-1. Then it catalyzes the NAD-dependent ring dehydrogenation of precorrin-2 to yield sirohydrochlorin. Finally, it catalyzes the ferrochelation of sirohydrochlorin to yield siroheme. This is Siroheme synthase from Thiobacillus denitrificans (strain ATCC 25259 / T1).